Consider the following 201-residue polypeptide: Retinol-binding protein 4 (201 aa).

A signal peptide spans 1–18; sequence MEWVWALVVLAALGSAGA. Disulfide bonds link cysteine 22–cysteine 178, cysteine 88–cysteine 192, and cysteine 138–cysteine 147. Glutamine 116 lines the substrate pocket. The residue at position 139 (arginine 139) is an Omega-N-methylarginine.

The protein belongs to the calycin superfamily. Lipocalin family. Interacts with TTR. Interaction with TTR prevents its loss by filtration through the kidney glomeruli. Interacts with STRA6.

The protein localises to the secreted. Its function is as follows. Retinol-binding protein that mediates retinol transport in blood plasma. Delivers retinol from the liver stores to the peripheral tissues. Transfers the bound all-trans retinol to STRA6, that then facilitates retinol transport across the cell membrane. In Equus caballus (Horse), this protein is Retinol-binding protein 4 (RBP4).